The following is a 261-amino-acid chain: Na(+)-translocating NADH-quinone reductase subunit C (261 aa).

A helical transmembrane segment spans residues Leu11 to Ala31. Thr230 is modified (FMN phosphoryl threonine).

This sequence belongs to the NqrC family. As to quaternary structure, composed of six subunits; NqrA, NqrB, NqrC, NqrD, NqrE and NqrF. FMN serves as cofactor.

The protein localises to the cell inner membrane. The catalysed reaction is a ubiquinone + n Na(+)(in) + NADH + H(+) = a ubiquinol + n Na(+)(out) + NAD(+). In terms of biological role, NQR complex catalyzes the reduction of ubiquinone-1 to ubiquinol by two successive reactions, coupled with the transport of Na(+) ions from the cytoplasm to the periplasm. NqrA to NqrE are probably involved in the second step, the conversion of ubisemiquinone to ubiquinol. The polypeptide is Na(+)-translocating NADH-quinone reductase subunit C (Pseudomonas aeruginosa (strain ATCC 15692 / DSM 22644 / CIP 104116 / JCM 14847 / LMG 12228 / 1C / PRS 101 / PAO1)).